The primary structure comprises 151 residues: Copper transporter 2 (151 aa).

The next 2 helical transmembrane spans lie at 42-62 and 97-117; these read GARGGMYALAILFMFALAVLL and VAYLIMLALMSFNGGVFLAIV.

It belongs to the copper transporter (Ctr) (TC 1.A.56) family. SLC31A subfamily. Self-interacts. Interacts with SWEET11 and COPT1.

It is found in the cell membrane. In terms of biological role, involved in the transport of copper, in cooperation with SWEET11 and COPT1. Contributes to the removal of copper (Cu) from xylem, and thus to the sensitivity toward bacterial pathogens such as X.oryzae pv. oryzae (Xoo). This Oryza sativa subsp. japonica (Rice) protein is Copper transporter 2 (COPT2).